The sequence spans 79 residues: RNA-binding protein KhpA (79 aa).

The KH domain maps to 30-79 (GRVLEVRVHPDDLGKVIGRNGRTARALRTVVGAIGGRGVRVDLVDVDHVR).

This sequence belongs to the KhpA RNA-binding protein family.

It localises to the cytoplasm. The protein resides in the nucleoid. A probable RNA-binding protein. This Streptomyces coelicolor (strain ATCC BAA-471 / A3(2) / M145) protein is RNA-binding protein KhpA.